Reading from the N-terminus, the 107-residue chain is U1-lycotoxin-Ls1n (107 aa).

The first 20 residues, 1–20 (MMKVLVVVALLVTLISYSSS), serve as a signal peptide directing secretion. Residues 21–41 (EGIDDLEADELLSLMANEQTR) constitute a propeptide that is removed on maturation. Intrachain disulfides connect cysteine 44–cysteine 59, cysteine 51–cysteine 68, cysteine 58–cysteine 86, and cysteine 70–cysteine 84.

Belongs to the neurotoxin 19 (CSTX) family. 04 (U1-Lctx) subfamily. Expressed by the venom gland.

The protein resides in the secreted. The sequence is that of U1-lycotoxin-Ls1n from Lycosa singoriensis (Wolf spider).